The primary structure comprises 1290 residues: Period circadian protein homolog 1 (1290 aa).

The interval 1–134 (MSGPLEGADG…SSEQSARART (134 aa)) is disordered. The interval 1–151 (MSGPLEGADG…LRELKLRLPP (151 aa)) is interaction with BTRC. Pro residues predominate over residues 25-38 (VPSPGPPQHRPCPG). Low complexity-rich tracts occupy residues 48–57 (NSNGSSGNES) and 64–115 (GASQ…ASSE). The segment covering 116–132 (QDNPSTSGCSSEQSARA) has biased composition (polar residues). T121 bears the Phosphothreonine; by CSNK1E mark. Phosphoserine; by CSNK1E is present on residues S122 and S126. The short motif at 138 to 147 (LMTALRELKL) is the Nuclear export signal 1 element. PAS domains follow at residues 208–275 (ITSE…PSRL) and 348–414 (YEAP…KILQ). A PAC domain is found at 422-465 (HSPIRFCARNGEYVTMDTSWAGFVHPWSRKVAFVLGRHKVRTAP). The Nuclear export signal 2 signature appears at 489–498 (LSEQIHRLLL). Disordered regions lie at residues 508 to 544 (GLCG…PAPV) and 646 to 698 (TTKR…KEPV). 2 stretches are compositionally biased toward low complexity: residues 517 to 533 (SPGP…SNGG) and 652 to 662 (ASSSSYTTSSA). A required for phosphorylation by CSNK1E region spans residues 596-815 (ELEAGSAPVQ…GLDSSSTAPS (220 aa)). Phosphoserine occurs at positions 661, 663, and 704. 3 disordered regions span residues 749 to 772 (GLAP…APDA), 805 to 874 (RGLD…PPAT), and 938 to 977 (ALQT…FNSR). Positions 751–769 (APGPAPSPAPSPTVAPDPA) are enriched in pro residues. S815 is subject to Phosphoserine. The Nuclear localization signal signature appears at 827 to 843 (APPSRRHHCRSKAKRSR). Over residues 830 to 847 (SRRHHCRSKAKRSRHHQN) the composition is skewed to basic residues. The span at 860–874 (SPVPPSTPWPTPPAT) shows a compositional bias: pro residues. Low complexity predominate over residues 950-961 (ASHSPSPSLPAL). A phosphoserine mark is found at S979 and S980. The short motif at 982-989 (LQLNLLQL) is the Nuclear export signal 3 element. Positions 996–1037 (EGAAVAGGPGSSAGPPPPSAEAAEPEARLAEVTESSNQDALS) are disordered. The LXXLL signature appears at 1043-1047 (LELLL). A compositionally biased stretch (low complexity) spans 1051 to 1062 (SRSGTGSAASGS). Disordered regions lie at residues 1051–1098 (SRSG…SKYF) and 1207–1290 (SSTQ…NCTS). A compositionally biased stretch (gly residues) spans 1063–1077 (LGSGLGSGSGSGSHE). Low complexity predominate over residues 1078–1095 (GGSTSASITRSSQSSHTS). Residues 1149–1290 (SRDMTSVLKQ…ALPTAGNCTS (142 aa)) are CRY binding domain. Residues 1236 to 1248 (GEQGSSGGGSGEG) are compositionally biased toward gly residues.

In terms of assembly, homodimer. Component of the circadian core oscillator, which includes the CRY proteins, CLOCK or NPAS2, BMAL1 or BMAL2, CSNK1D and/or CSNK1E, TIMELESS, and the PER proteins. Interacts directly with TIMELESS, PER2, PER3, CRY1 and CRY2. Interacts with BMAL1 and CLOCK. Interacts with GPRASP1. Interacts (phosphorylated) with BTRC and FBXW11; the interactions trigger proteasomal degradation. Interacts with NONO, WDR5 and SFPQ. Interacts with USP2. Interacts with HNF4A. In terms of processing, phosphorylated on serine residues by CSNK1D, CSNK1E and probably also by CSNK1G2. Phosphorylation by CSNK1D or CSNK1E promotes nuclear location of PER proteins as well as ubiquitination and subsequent degradation. May be dephosphorylated by PP1. Ubiquitinated; requires phosphorylation by CSNK1E and interaction with BTRC and FBXW11. Deubiquitinated by USP2. In terms of tissue distribution, widely expressed. Expressed in hair follicles (at protein level). Found in heart, brain, placenta, lung, liver, skeletal muscle, pancreas, kidney, spleen, thymus, prostate, testis, ovary and small intestine. Highest level in skeletal muscle.

It is found in the nucleus. Its subcellular location is the cytoplasm. Transcriptional repressor which forms a core component of the circadian clock. The circadian clock, an internal time-keeping system, regulates various physiological processes through the generation of approximately 24 hour circadian rhythms in gene expression, which are translated into rhythms in metabolism and behavior. It is derived from the Latin roots 'circa' (about) and 'diem' (day) and acts as an important regulator of a wide array of physiological functions including metabolism, sleep, body temperature, blood pressure, endocrine, immune, cardiovascular, and renal function. Consists of two major components: the central clock, residing in the suprachiasmatic nucleus (SCN) of the brain, and the peripheral clocks that are present in nearly every tissue and organ system. Both the central and peripheral clocks can be reset by environmental cues, also known as Zeitgebers (German for 'timegivers'). The predominant Zeitgeber for the central clock is light, which is sensed by retina and signals directly to the SCN. The central clock entrains the peripheral clocks through neuronal and hormonal signals, body temperature and feeding-related cues, aligning all clocks with the external light/dark cycle. Circadian rhythms allow an organism to achieve temporal homeostasis with its environment at the molecular level by regulating gene expression to create a peak of protein expression once every 24 hours to control when a particular physiological process is most active with respect to the solar day. Transcription and translation of core clock components (CLOCK, NPAS2, BMAL1, BMAL2, PER1, PER2, PER3, CRY1 and CRY2) plays a critical role in rhythm generation, whereas delays imposed by post-translational modifications (PTMs) are important for determining the period (tau) of the rhythms (tau refers to the period of a rhythm and is the length, in time, of one complete cycle). A diurnal rhythm is synchronized with the day/night cycle, while the ultradian and infradian rhythms have a period shorter and longer than 24 hours, respectively. Disruptions in the circadian rhythms contribute to the pathology of cardiovascular diseases, cancer, metabolic syndromes and aging. A transcription/translation feedback loop (TTFL) forms the core of the molecular circadian clock mechanism. Transcription factors, CLOCK or NPAS2 and BMAL1 or BMAL2, form the positive limb of the feedback loop, act in the form of a heterodimer and activate the transcription of core clock genes and clock-controlled genes (involved in key metabolic processes), harboring E-box elements (5'-CACGTG-3') within their promoters. The core clock genes: PER1/2/3 and CRY1/2 which are transcriptional repressors form the negative limb of the feedback loop and interact with the CLOCK|NPAS2-BMAL1|BMAL2 heterodimer inhibiting its activity and thereby negatively regulating their own expression. This heterodimer also activates nuclear receptors NR1D1/2 and RORA/B/G, which form a second feedback loop and which activate and repress BMAL1 transcription, respectively. Regulates circadian target genes expression at post-transcriptional levels, but may not be required for the repression at transcriptional level. Controls PER2 protein decay. Represses CRY2 preventing its repression on CLOCK/BMAL1 target genes such as FXYD5 and SCNN1A in kidney and PPARA in liver. Besides its involvement in the maintenance of the circadian clock, has an important function in the regulation of several processes. Participates in the repression of glucocorticoid receptor NR3C1/GR-induced transcriptional activity by reducing the association of NR3C1/GR to glucocorticoid response elements (GREs) by BMAL1:CLOCK. Plays a role in the modulation of the neuroinflammatory state via the regulation of inflammatory mediators release, such as CCL2 and IL6. In spinal astrocytes, negatively regulates the MAPK14/p38 and MAPK8/JNK MAPK cascades as well as the subsequent activation of NFkappaB. Coordinately regulates the expression of multiple genes that are involved in the regulation of renal sodium reabsorption. Can act as gene expression activator in a gene and tissue specific manner, in kidney enhances WNK1 and SLC12A3 expression in collaboration with CLOCK. Modulates hair follicle cycling. Represses the CLOCK-BMAL1 induced transcription of BHLHE40/DEC1. The chain is Period circadian protein homolog 1 (PER1) from Homo sapiens (Human).